The chain runs to 44 residues: Photosystem I reaction center subunit IX (44 aa).

The chain crosses the membrane as a helical span at residues 7-27; sequence YLSVAPVLSTLWFGSLAGLLI.

The protein belongs to the PsaJ family.

The protein localises to the plastid. The protein resides in the chloroplast thylakoid membrane. In terms of biological role, may help in the organization of the PsaE and PsaF subunits. The chain is Photosystem I reaction center subunit IX from Lactuca sativa (Garden lettuce).